We begin with the raw amino-acid sequence, 99 residues long: Small ribosomal subunit protein uS17 (99 aa).

Belongs to the universal ribosomal protein uS17 family. As to quaternary structure, part of the 30S ribosomal subunit.

Functionally, one of the primary rRNA binding proteins, it binds specifically to the 5'-end of 16S ribosomal RNA. This Thermosipho melanesiensis (strain DSM 12029 / CIP 104789 / BI429) protein is Small ribosomal subunit protein uS17.